Reading from the N-terminus, the 820-residue chain is Inhibitor of nuclear factor kappa-B kinase epsilon subunit homolog 1 (820 aa).

In terms of domain architecture, Protein kinase spans 21-299; sequence LFNDESIGKG…TDIFEFQPVT (279 aa). Residues 27-35 and K49 contribute to the ATP site; that span reads IGKGAYSEV. The active-site Proton acceptor is the D149. The tract at residues 758 to 798 is disordered; it reads SPNKEQFPKPEQDSILESSIDEGSTSFESTPPSSPPDVGSN.

The protein belongs to the protein kinase superfamily. Ser/Thr protein kinase family. In terms of assembly, interacts with allo-1 (via N-terminus); the interaction is direct. Expressed in oocytes.

It is found in the cytoplasm. It carries out the reaction L-seryl-[protein] + ATP = O-phospho-L-seryl-[protein] + ADP + H(+). The enzyme catalyses L-threonyl-[protein] + ATP = O-phospho-L-threonyl-[protein] + ADP + H(+). Serine/threonine-protein kinase, which plays a role in regulating allophagy, an autophagic process in which paternal organelles, including mitochondria and membranous organelles, are degraded in embryos. Phosphorylates the allophagy receptor allo-1, which is required for allophagy. This is Inhibitor of nuclear factor kappa-B kinase epsilon subunit homolog 1 from Caenorhabditis elegans.